The chain runs to 313 residues: Putative zinc finger protein 077L (313 aa).

A C3H1-type zinc finger spans residues 174-199; that stretch reads CFSITKGIECPHYSCTYIHNYSQIEH. The disordered stretch occupies residues 294–313; it reads SDDSDSENNDEDDDWKIDLF. Residues 296 to 313 are compositionally biased toward acidic residues; the sequence is DSDSENNDEDDDWKIDLF.

It belongs to the IIV-6 077L family.

In Invertebrate iridescent virus 6 (IIV-6), this protein is Putative zinc finger protein 077L.